Reading from the N-terminus, the 229-residue chain is GTP cyclohydrolase 1 (229 aa).

Residues Cys116, His119, and Cys187 each contribute to the Zn(2+) site.

The protein belongs to the GTP cyclohydrolase I family. Toroid-shaped homodecamer, composed of two pentamers of five dimers.

The catalysed reaction is GTP + H2O = 7,8-dihydroneopterin 3'-triphosphate + formate + H(+). It functions in the pathway cofactor biosynthesis; 7,8-dihydroneopterin triphosphate biosynthesis; 7,8-dihydroneopterin triphosphate from GTP: step 1/1. The sequence is that of GTP cyclohydrolase 1 from Synechococcus sp. (strain JA-3-3Ab) (Cyanobacteria bacterium Yellowstone A-Prime).